The chain runs to 628 residues: (+)-alpha-pinene synthase, chloroplastic (628 aa).

Residues 1–48 (MALVSAVPLNSKLCLRRTLFGFSHELKAIHSTVPNLGMCRGGKSIAPS) constitute a chloroplast transit peptide. Mg(2+) is bound by residues D379, D383, and D531. The DDXXD motif motif lies at 379–383 (DDIYD). S539 lines the K(+) pocket.

The protein belongs to the terpene synthase family. Tpsd subfamily. It depends on Mg(2+) as a cofactor. Mn(2+) is required as a cofactor. K(+) serves as cofactor.

Its subcellular location is the plastid. It is found in the chloroplast. The enzyme catalyses (2E)-geranyl diphosphate = (1R,5R)-alpha-pinene + diphosphate. The protein operates within terpene metabolism; oleoresin biosynthesis. Functionally, involved in defensive oleoresin formation in conifers in response to insect attack or other injury. Involved in monoterpene (C10) olefins biosynthesis. Produces mainly (+)-alpha-pinene (97%) with a small amount of (-)-alpha-pinene (3%). The chain is (+)-alpha-pinene synthase, chloroplastic (PT30) from Pinus taeda (Loblolly pine).